The following is a 956-amino-acid chain: Calsyntenin-3 (956 aa).

A signal peptide spans 1-19 (MTLLLVSLLLASLLQISSG). The Cytoplasmic segment spans residues 1–21 (MTLLLVSLLLASLLQISSGNK). At 20–847 (NKANKHKPWI…SHRNSMVPSA (828 aa)) the chain is on the extracellular side. The segment at residues 22–42 (ANKHKPWIEAEYQGIVMENDN) is an intramembrane region (helical). 2 consecutive Cadherin domains span residues 29-145 (IEAE…APVF) and 146-246 (VERL…KPSW). Residues 43 to 73 (TVLLNPPLFALDKDAPLRYAGEICGFRLHGS) lie on the Cytoplasmic side of the membrane. Residues 74 to 94 (GVPFEAVILDKATGEGLIRAK) constitute an intramembrane region (helical). Residues 95–139 (EPVDCEAQKEHTFTIQAYDCGEGPDGTNTKKSHKATVHVRVNDVN) are Cytoplasmic-facing. Residues 140 to 160 (EFAPVFVERLYRAAVTEGKLY) constitute an intramembrane region (helical). At 161–248 (DRILRVEAID…KPTCKPSWQG (88 aa)) the chain is on the cytoplasmic side. A helical transmembrane segment spans residues 249 to 269 (WNKRIEYAPGAGSLALFPGIR). The Lumenal portion of the chain corresponds to 270–357 (LETCDEPLWN…GTQAVQVPLG (88 aa)). Asn-299, Asn-327, Asn-347, Asn-507, and Asn-740 each carry an N-linked (GlcNAc...) asparagine glycan. A helical transmembrane segment spans residues 848–868 (ATLIIVVCVGFLVLMVILGLV). Residues 869–956 (RIHSLHRRVS…RIIESPPHRY (88 aa)) are Cytoplasmic-facing. A disordered region spans residues 916–956 (QTCVAGVAGGQQEEEDSSDSEAADSPSSDERRIIESPPHRY). The span at 927-937 (QEEEDSSDSEA) shows a compositional bias: acidic residues. Residues 943 to 956 (SDERRIIESPPHRY) are compositionally biased toward basic and acidic residues.

The protein belongs to the calsyntenin family. In terms of assembly, interacts (via cadherin domains) with both alpha and beta isoforms of neurexins (NRXN1, NRXN2 and NRXN3). Directly interacts with APBA2. Forms a tripartite complex with APBA2 and APP. Interacts with low affinity with KLC1. Interacts with SLC23A2/SVCT2. Interacts with CIDEA; inhibiting the lipid transferase activity of CIDEA. Interacts with CIDEC; inhibiting the lipid transferase activity of CIDEC. In terms of processing, proteolytically processed under normal cellular conditions. A primary zeta-cleavage generates a large extracellular (soluble) N-terminal domain (sAlc) and a short C-terminal transmembrane fragment (CTF1). A secondary cleavage catalyzed by gamma-secretase within the transmembrane domain releases the beta-Alc-beta chain in the extracellular milieu and produces an intracellular fragment (AlcICD). This processing is strongly suppressed in the tripartite complex formed with APBA2 and APP, which seems to prevent the association with gamma-secretase. Ubiquitinated: endoplasmic reticulum-localized protein is ubiquitinated and degraded by the endoplasmic reticulum-associated degradation (ERAD) pathway. Restricted to the brain (at protein level). In the cerebral cortex, found in the somas and neuropil of all layers. Expressed at highest levels in neurons of cortical layer 5 and, at lower levels, in neurons of the upper layers. Highly expressed in Purkinje cells. Also found in a few scattered interneurons throughout the granule cell layer and occasionally in neurons in the molecular layer (at protein level). In all layers, high levels in a subpopulation of presumptive GABAergic neurons (based on morphology). As to expression, expression is restricted to adipose tissue, with high expression in thermogenic adipocytes (brown adipose tissue).

It is found in the postsynaptic cell membrane. The protein resides in the endoplasmic reticulum membrane. Its subcellular location is the golgi apparatus membrane. It localises to the cell projection. The protein localises to the dendrite. It is found in the lipid droplet. Functionally, postsynaptic adhesion molecule that binds to presynaptic neurexins to mediate both excitatory and inhibitory synapse formation. Promotes synapse development by acting as a cell adhesion molecule at the postsynaptic membrane, which associates with both neurexin-alpha and neurexin-beta proteins at the presynaptic membrane. Regulates the balance between excitatory and inhibitory synapses by inhibiting formation of excitatory parallel-fiber synapses and promoting formation of inhibitory synapses in the same neuron. May also be involved in ascorbate (vitamin C) uptake via its interaction with SLC23A2/SVCT2. Complex formation with APBA2 and APP, stabilizes APP metabolism and enhances APBA2-mediated suppression of beta-APP40 secretion, due to the retardation of intracellular APP maturation. Adipose-specific isoform that plays a key role in adaptive thermogenesis. Facilitates the efficient use of stored triglyceride by promoting multilocular morphology of thermogenic adipocytes: acts by inhibiting the activity of CIDEA and CIDEC on lipid droplets, thereby preventing lipid droplet fusion and facilitating lipid utilization. May also participate in adaptive thermogenesis by promoting sympathetic innervation of thermogenic adipose tissue: acts by driving secretion of neurotrophic factor S100B from brown adipocytes, stimulating neurite outgrowth from sympathetic neurons. The sequence is that of Calsyntenin-3 from Mus musculus (Mouse).